The sequence spans 471 residues: A-type ATP synthase subunit B (471 aa).

It belongs to the ATPase alpha/beta chains family. In terms of assembly, has multiple subunits with at least A(3), B(3), C, D, E, F, H, I and proteolipid K(x).

It localises to the cell membrane. Its function is as follows. Component of the A-type ATP synthase that produces ATP from ADP in the presence of a proton gradient across the membrane. The B chain is a regulatory subunit. This is A-type ATP synthase subunit B from Ignicoccus hospitalis (strain KIN4/I / DSM 18386 / JCM 14125).